The chain runs to 389 residues: Brix domain-containing protein C1B9.03c (389 aa).

Residues 28 to 309 enclose the Brix domain; sequence SMVIRSGASE…LIKITEDAMG (282 aa). The span at 323–350 shows a compositional bias: basic and acidic residues; sequence EEIKQQDNFHEQSRALKEKRKKEQDENV. The interval 323-389 is disordered; sequence EEIKQQDNFH…EGSSAYSDTE (67 aa). Residues 351 to 362 are compositionally biased toward basic residues; the sequence is RRKRENKKRRKD. At Ser-377 the chain carries Phosphoserine. A compositionally biased stretch (polar residues) spans 379 to 389; that stretch reads NEGSSAYSDTE.

This is Brix domain-containing protein C1B9.03c from Schizosaccharomyces pombe (strain 972 / ATCC 24843) (Fission yeast).